Consider the following 179-residue polypeptide: Adenine phosphoribosyltransferase (179 aa).

Belongs to the purine/pyrimidine phosphoribosyltransferase family. Homodimer.

It is found in the cytoplasm. It carries out the reaction AMP + diphosphate = 5-phospho-alpha-D-ribose 1-diphosphate + adenine. It participates in purine metabolism; AMP biosynthesis via salvage pathway; AMP from adenine: step 1/1. Its function is as follows. Catalyzes a salvage reaction resulting in the formation of AMP, that is energically less costly than de novo synthesis. The chain is Adenine phosphoribosyltransferase from Ruegeria pomeroyi (strain ATCC 700808 / DSM 15171 / DSS-3) (Silicibacter pomeroyi).